We begin with the raw amino-acid sequence, 62 residues long: Large ribosomal subunit protein eL24 (62 aa).

Residues cysteine 6, cysteine 9, cysteine 32, and cysteine 36 each coordinate Zn(2+). Residues 6-36 (CSFCEGTIEPGCGKKYVKKDGSVMHFCSSKC) form a C4-type zinc finger.

It belongs to the eukaryotic ribosomal protein eL24 family. Part of the 50S ribosomal subunit. Forms a cluster with proteins L3 and L14. It depends on Zn(2+) as a cofactor.

Its function is as follows. Binds to the 23S rRNA. This is Large ribosomal subunit protein eL24 from Methanococcus maripaludis (strain C7 / ATCC BAA-1331).